We begin with the raw amino-acid sequence, 143 residues long: Putative pre-16S rRNA nuclease (143 aa).

The protein belongs to the YqgF nuclease family.

It is found in the cytoplasm. Functionally, could be a nuclease involved in processing of the 5'-end of pre-16S rRNA. In Lactobacillus gasseri (strain ATCC 33323 / DSM 20243 / BCRC 14619 / CIP 102991 / JCM 1131 / KCTC 3163 / NCIMB 11718 / NCTC 13722 / AM63), this protein is Putative pre-16S rRNA nuclease.